A 120-amino-acid polypeptide reads, in one-letter code: NAD(P)H-quinone oxidoreductase subunit 3 (120 aa).

3 helical membrane-spanning segments follow: residues 6 to 26 (GYDA…LALV), 64 to 84 (MFAL…PWAV), and 89 to 109 (LGLL…VALA).

It belongs to the complex I subunit 3 family. In terms of assembly, NDH-1 can be composed of about 15 different subunits; different subcomplexes with different compositions have been identified which probably have different functions.

The protein localises to the cellular thylakoid membrane. The catalysed reaction is a plastoquinone + NADH + (n+1) H(+)(in) = a plastoquinol + NAD(+) + n H(+)(out). The enzyme catalyses a plastoquinone + NADPH + (n+1) H(+)(in) = a plastoquinol + NADP(+) + n H(+)(out). NDH-1 shuttles electrons from an unknown electron donor, via FMN and iron-sulfur (Fe-S) centers, to quinones in the respiratory and/or the photosynthetic chain. The immediate electron acceptor for the enzyme in this species is believed to be plastoquinone. Couples the redox reaction to proton translocation, and thus conserves the redox energy in a proton gradient. Cyanobacterial NDH-1 also plays a role in inorganic carbon-concentration. In Prochlorococcus marinus (strain MIT 9211), this protein is NAD(P)H-quinone oxidoreductase subunit 3.